A 210-amino-acid polypeptide reads, in one-letter code: Phosphate propanoyltransferase (210 aa).

26-28 (VSN) provides a ligand contact to CoA. Positions 30 and 32 each coordinate Zn(2+). Positions 71 and 78 each coordinate CoA. Arg-84 is a phosphate binding site. Residues Glu-90, His-138, His-140, and His-186 each coordinate Zn(2+). Position 193 (Asn-193) interacts with CoA.

The protein belongs to the PduL family. In terms of assembly, monomer, when purified in the absence of the encapsulation peptide (EP, residues 1-27). The EP may influence oligomerization. Zn(2+) serves as cofactor.

The protein resides in the bacterial microcompartment. The enzyme catalyses propanoyl-CoA + phosphate = propanoyl phosphate + CoA. Its pathway is polyol metabolism; 1,2-propanediol degradation. Functionally, involved in 1,2-propanediol (1,2-PD) utilization in the bacterial microcompartment (BMC) dedicated to 1,2-PD degradation by catalyzing the conversion of propanoyl-CoA to propanoyl-phosphate. Also able to catalyze the reverse reaction. Also has phosphate acetyltransferase activity to a lesser extent. Required for optimal growth on 1,2-PD when the BMC is intact. CoA is regenerated within the BMC (for use by PduP) via this enzyme, although there must also be cofactor transport across the BMC. Directly targeted to the BMC. In terms of biological role, the 1,2-PD-specific bacterial microcompartment (BMC) concentrates low levels of 1,2-PD catabolic enzymes, concentrates volatile reaction intermediates thus enhancing pathway flux and keeps the level of toxic, mutagenic propionaldehyde low. The sequence is that of Phosphate propanoyltransferase from Salmonella typhimurium (strain LT2 / SGSC1412 / ATCC 700720).